Consider the following 170-residue polypeptide: Peptide deformylase-like (170 aa).

Glutamate 139 is a catalytic residue.

The protein belongs to the polypeptide deformylase family.

This is Peptide deformylase-like from Bradyrhizobium diazoefficiens (strain JCM 10833 / BCRC 13528 / IAM 13628 / NBRC 14792 / USDA 110).